The sequence spans 443 residues: Chromosomal replication initiator protein DnaA (443 aa).

Residues 1–76 (METKALWEKL…KSVLNSYVSV (76 aa)) form a domain I, interacts with DnaA modulators region. A domain II region spans residues 76 to 99 (VDFLTKEIFEKNTKKENKKEPINT). Positions 100–320 (VLSENALTFE…GLVNRLLFFG (221 aa)) are domain III, AAA+ region. The ATP site is built by G145, G147, K148, and T149. Residues 321 to 443 (IQNDLGHIID…ESLKNEIIGK (123 aa)) form a domain IV, binds dsDNA region.

The protein belongs to the DnaA family. In terms of assembly, oligomerizes as a right-handed, spiral filament on DNA at oriC.

The protein localises to the cytoplasm. In terms of biological role, plays an essential role in the initiation and regulation of chromosomal replication. ATP-DnaA binds to the origin of replication (oriC) to initiate formation of the DNA replication initiation complex once per cell cycle. Binds the DnaA box (a 9 base pair repeat at the origin) and separates the double-stranded (ds)DNA. Forms a right-handed helical filament on oriC DNA; dsDNA binds to the exterior of the filament while single-stranded (ss)DNA is stabiized in the filament's interior. The ATP-DnaA-oriC complex binds and stabilizes one strand of the AT-rich DNA unwinding element (DUE), permitting loading of DNA polymerase. After initiation quickly degrades to an ADP-DnaA complex that is not apt for DNA replication. Binds acidic phospholipids. This is Chromosomal replication initiator protein DnaA from Mesoplasma florum (strain ATCC 33453 / NBRC 100688 / NCTC 11704 / L1) (Acholeplasma florum).